We begin with the raw amino-acid sequence, 342 residues long: Flavanone 3-dioxygenase 2 (342 aa).

One can recognise a Fe2OG dioxygenase domain in the interval 193-293; it reads QEQHMAVNYY…RMSVASFLCP (101 aa). Fe cation-binding residues include His217, Asp219, and His274. Position 284 (Arg284) interacts with 2-oxoglutarate.

It belongs to the iron/ascorbate-dependent oxidoreductase family. Requires Fe(2+) as cofactor. L-ascorbate serves as cofactor. Expressed in roots, leaves and stems. Expressed at low levels in seeds.

It carries out the reaction a (2S)-flavan-4-one + 2-oxoglutarate + O2 = a (2R,3R)-dihydroflavonol + succinate + CO2. It functions in the pathway secondary metabolite biosynthesis; flavonoid biosynthesis. In terms of biological role, catalyzes the 3-beta-hydroxylation of 2S-flavanones to 2R,3R-dihydroflavonols which are intermediates in the biosynthesis of flavonols, anthocyanidins, catechins and proanthocyanidins in plants. Converts (2S)-eriodictyol to (+)-taxifolin and (2S)-naringenin to (+)-(2R/3R)-dihydrokaempferol in vitro. In Oryza sativa subsp. japonica (Rice), this protein is Flavanone 3-dioxygenase 2.